The following is a 318-amino-acid chain: Olfactory receptor 5G26 (318 aa).

Residues 1-28 are Extracellular-facing; it reads MMHRNQTVVTEFFFTGLTSSFHLQIVLF. N-linked (GlcNAc...) asparagine glycosylation is present at asparagine 5. The helical transmembrane segment at 29–49 threads the bilayer; it reads LTFLCVYLATLLGNLGMIILI. At 50-56 the chain is on the cytoplasmic side; sequence HLDTRLH. Residues 57-77 traverse the membrane as a helical segment; it reads IPMYFFLSHLSFVDACSSSVI. The Extracellular segment spans residues 78–93; sequence SPKMLSDMFVDKKVIS. The helical transmembrane segment at 94-114 threads the bilayer; it reads FLGCAIQLCLFSQFVVTECFL. A disulfide bridge links cysteine 97 with cysteine 189. Topologically, residues 115 to 144 are cytoplasmic; it reads LASMAYDRYVAICKPLLYTLIMSQRVCVQL. A helical membrane pass occupies residues 145–165; the sequence is VIGPYSIGFVSTMVHIISAFV. The Extracellular segment spans residues 166–198; that stretch reads LPYCGPNLINHFFCDLLPVLSLACANTQMKKRL. Residues 199-219 traverse the membrane as a helical segment; it reads LFIVAGILGVFSGIIILVSYV. Over 220–239 the chain is Cytoplasmic; that stretch reads YIAITILKISSADGRRKAFS. The helical transmembrane segment at 240-260 threads the bilayer; that stretch reads TCSSHLTAVSILYGTLFFIYV. At 261–271 the chain is on the extracellular side; that stretch reads RPSSSFSLDIN. Residues 272-292 form a helical membrane-spanning segment; it reads KVVSLFYTTVIPMLNPFIYSL. The Cytoplasmic portion of the chain corresponds to 293–318; that stretch reads RNKEVKDALIRTFEKQFCYSFQDKIL.

It belongs to the G-protein coupled receptor 1 family.

The protein resides in the cell membrane. In terms of biological role, potential odorant receptor. In Mus musculus (Mouse), this protein is Olfactory receptor 5G26.